We begin with the raw amino-acid sequence, 359 residues long: Structure-specific endonuclease subunit SLX1 homolog (359 aa).

The GIY-YIG domain maps to Gly9–Asn91. The SLX1-type zinc finger occupies Cys192–Cys238. The tract at residues Val256–Asp359 is disordered. Residues Val269–Tyr281 show a composition bias toward polar residues. Over residues Glu295–Ser306 the composition is skewed to basic and acidic residues. A compositionally biased stretch (low complexity) spans Ser316–Ser326.

This sequence belongs to the SLX1 family. As to quaternary structure, forms a heterodimer with a member of the SLX4 family. A divalent metal cation serves as cofactor.

The protein resides in the nucleus. In terms of biological role, catalytic subunit of a heterodimeric structure-specific endonuclease that resolves DNA secondary structures generated during DNA repair and recombination. Has endonuclease activity towards branched DNA substrates, introducing single-strand cuts in duplex DNA close to junctions with ss-DNA. This chain is Structure-specific endonuclease subunit SLX1 homolog, found in Giardia intestinalis (strain ATCC 50803 / WB clone C6) (Giardia lamblia).